Reading from the N-terminus, the 50-residue chain is RCPXHLQEYFYTSSKCSMAAVVFITRKNRQVCANPEKKWVREYINSLELS.

It belongs to the intercrine beta (chemokine CC) family.

It is found in the secreted. Functionally, chemoattractant for blood monocytes, memory T-helper cells and eosinophils. Causes the release of histamine from basophils and activates eosinophils. May activate several chemokine receptors including CCR1, CCR3, CCR4 and CCR5. May also be an agonist of the G protein-coupled receptor GPR75. Together with GPR75, may play a role in neuron survival through activation of a downstream signaling pathway involving the PI3, Akt and MAP kinases. By activating GPR75 may also play a role in insulin secretion by islet cells. The polypeptide is C-C motif chemokine 5 (CCL5) (Sus scrofa (Pig)).